Reading from the N-terminus, the 444-residue chain is 1,4-beta-D-glucan glucohydrolase (444 aa).

Glu164 functions as the Proton donor in the catalytic mechanism. Glu349 (nucleophile) is an active-site residue.

Belongs to the glycosyl hydrolase 1 family. As to quaternary structure, monomer.

It catalyses the reaction Hydrolysis of (1-&gt;4)-linkages in (1-&gt;4)-beta-D-glucans, to remove successive glucose units.. It carries out the reaction Hydrolysis of terminal, non-reducing beta-D-glucosyl residues with release of beta-D-glucose.. It participates in glycan metabolism; cellulose degradation. Its pathway is glycan metabolism; beta-D-glucan degradation. With respect to regulation, activated by glucose up to 200 mM when p-nitrophenyl-beta-glucoside is used as the substrate. This activation by end product concentrations may be due to a transglycosylation activity of the enzyme. Broad substrate specificity glycosidase. Releases glucose from soluble glucooligomers, with a preference for longer oligomers; acts more readily on cellotetraose than on cellobiose. Displays similar activities towards the disaccharides lactose and cellobiose. Is also able to hydrolyze various aryl-beta-glycosides in vitro. The chain is 1,4-beta-D-glucan glucohydrolase from Thermotoga neapolitana (strain ATCC 49049 / DSM 4359 / NBRC 107923 / NS-E).